Here is a 645-residue protein sequence, read N- to C-terminus: Threonine--tRNA ligase (645 aa).

The 62-residue stretch at 3–64 (DMINITFPDG…EQDGTITIVT (62 aa)) folds into the TGS domain. A catalytic region spans residues 247-544 (DHRKLGKELG…LLEEYKGAFP (298 aa)). Positions 340, 391, and 521 each coordinate Zn(2+).

It belongs to the class-II aminoacyl-tRNA synthetase family. Homodimer. Requires Zn(2+) as cofactor.

Its subcellular location is the cytoplasm. It catalyses the reaction tRNA(Thr) + L-threonine + ATP = L-threonyl-tRNA(Thr) + AMP + diphosphate + H(+). Catalyzes the attachment of threonine to tRNA(Thr) in a two-step reaction: L-threonine is first activated by ATP to form Thr-AMP and then transferred to the acceptor end of tRNA(Thr). Also edits incorrectly charged L-seryl-tRNA(Thr). This is Threonine--tRNA ligase from Halalkalibacterium halodurans (strain ATCC BAA-125 / DSM 18197 / FERM 7344 / JCM 9153 / C-125) (Bacillus halodurans).